The sequence spans 453 residues: Phenolic glucoside malonyltransferase 1 (453 aa).

His165 acts as the Proton acceptor in catalysis. The HXXXD motif motif lies at 165-169; sequence HVAGD. Residues Lys254, His266, and 268–269 each bind malonyl-CoA; that span reads TS. Catalysis depends on Asp394, which acts as the Proton acceptor. Positions 394–398 match the DFGWG motif motif; sequence DFGWG.

Belongs to the plant acyltransferase family. Phenolic glucoside malonyltransferase subfamily. As to quaternary structure, monomer. In terms of tissue distribution, highly expressed in flower. Also expressed in flower bud, stem, root and leaf.

It carries out the reaction a flavonol 3-O-beta-D-glucoside + malonyl-CoA = a flavonol 3-O-(6-O-malonyl-beta-D-glucoside) + CoA. The enzyme catalyses a flavonol 7-O-beta-D-glucoside + malonyl-CoA = a flavonol 7-O-(6-O-malonyl-beta-D-glucoside) + CoA. Malonyltransferase with broad substrate specificity acting on phenolic glucosides including xenobiotic naphthols. Has activity against flavonoid 7-O-glucosides, flavonoid 3-O-glucosides and naphthol glucosides, and to a lesser extent against coumarin glucosides in vitro. Prefers malonyl-CoA as an acyl donor, but also active with succinyl-CoA and methylmalonyl-CoA, but not with acetyl-CoA. The sequence is that of Phenolic glucoside malonyltransferase 1 from Nicotiana tabacum (Common tobacco).